Here is a 790-residue protein sequence, read N- to C-terminus: Pre-mRNA-splicing factor cwf3 (790 aa).

HAT repeat units follow at residues 12 to 44 (DLIN…THEG), 45 to 77 (STLE…LRVA), 89 to 121 (EAFA…FLMK), 123 to 157 (PNVT…YAED), 159 to 190 (GGLF…KLGL), 193 to 228 (EAAR…LVVQ), 233 to 266 (TQNI…YYIR), 268 to 303 (GDYE…FEEQ), 331 to 364 (KILD…FLED), 368 to 402 (KVVQ…FYEN), 404 to 440 (DDLE…MELR), 457 to 492 (APRK…LEES), 494 to 526 (GTIE…LLEE), 528 to 562 (AYFE…KFVK), 567 to 601 (THME…FEEK), 639 to 673 (YGVL…METK), and 675 to 709 (GEID…FEIR). Positions 769–790 (LAGFVLSKSNPQETSKITGEEN) are disordered. Residues 775 to 790 (SKSNPQETSKITGEEN) are compositionally biased toward polar residues.

It belongs to the crooked-neck family. In terms of assembly, belongs to the 40S cdc5-associated complex (or cwf complex), a spliceosome sub-complex reminiscent of a late-stage spliceosome composed of the U2, U5 and U6 snRNAs and at least brr2, cdc5, cwf2/prp3, cwf3/syf1, cwf4/syf3, cwf5/ecm2, spp42/cwf6, cwf7/spf27, cwf8, cwf9, cwf10, cwf11, cwf12, prp45/cwf13, cwf14, cwf15, cwf16, cwf17, cwf18, cwf19, cwf20, cwf21, cwf22, cwf23, cwf24, cwf25, cwf26, cyp7/cwf27, cwf28, cwf29/ist3, lea1, msl1, prp5/cwf1, prp10, prp12/sap130, prp17, prp22, sap61, sap62, sap114, sap145, slu7, smb1, smd1, smd3, smf1, smg1 and syf2.

It localises to the nucleus. In terms of biological role, involved in pre-mRNA splicing and cell cycle progression. The chain is Pre-mRNA-splicing factor cwf3 (cwf3) from Schizosaccharomyces pombe (strain 972 / ATCC 24843) (Fission yeast).